Reading from the N-terminus, the 308-residue chain is Tetraacyldisaccharide 4'-kinase (308 aa).

Position 63-70 (63-70 (SFGGNGKT)) interacts with ATP.

This sequence belongs to the LpxK family.

It carries out the reaction a lipid A disaccharide + ATP = a lipid IVA + ADP + H(+). The protein operates within glycolipid biosynthesis; lipid IV(A) biosynthesis; lipid IV(A) from (3R)-3-hydroxytetradecanoyl-[acyl-carrier-protein] and UDP-N-acetyl-alpha-D-glucosamine: step 6/6. Its function is as follows. Transfers the gamma-phosphate of ATP to the 4'-position of a tetraacyldisaccharide 1-phosphate intermediate (termed DS-1-P) to form tetraacyldisaccharide 1,4'-bis-phosphate (lipid IVA). The sequence is that of Tetraacyldisaccharide 4'-kinase from Campylobacter jejuni subsp. jejuni serotype O:23/36 (strain 81-176).